Here is a 660-residue protein sequence, read N- to C-terminus: DNA mismatch repair protein MutL (660 aa).

Disordered regions lie at residues 368-426 and 439-461; these read PQQT…PTKK and NREQRESTSQVNEQSHTFRSTQQ. Residues 406–417 are compositionally biased toward low complexity; sequence SSSSNSTAPSRS.

The protein belongs to the DNA mismatch repair MutL/HexB family.

Its function is as follows. This protein is involved in the repair of mismatches in DNA. It is required for dam-dependent methyl-directed DNA mismatch repair. May act as a 'molecular matchmaker', a protein that promotes the formation of a stable complex between two or more DNA-binding proteins in an ATP-dependent manner without itself being part of a final effector complex. This Aliivibrio fischeri (strain ATCC 700601 / ES114) (Vibrio fischeri) protein is DNA mismatch repair protein MutL.